A 514-amino-acid polypeptide reads, in one-letter code: Lysine--tRNA ligase (514 aa).

Mg(2+) contacts are provided by Glu-422 and Glu-429.

This sequence belongs to the class-II aminoacyl-tRNA synthetase family. In terms of assembly, homodimer. Requires Mg(2+) as cofactor.

The protein localises to the cytoplasm. The catalysed reaction is tRNA(Lys) + L-lysine + ATP = L-lysyl-tRNA(Lys) + AMP + diphosphate. This is Lysine--tRNA ligase from Psychrobacter arcticus (strain DSM 17307 / VKM B-2377 / 273-4).